A 277-amino-acid chain; its full sequence is 5'-nucleotidase SurE (277 aa).

Positions 16, 17, 48, and 101 each coordinate a divalent metal cation.

It belongs to the SurE nucleotidase family. A divalent metal cation serves as cofactor.

The protein resides in the cytoplasm. It carries out the reaction a ribonucleoside 5'-phosphate + H2O = a ribonucleoside + phosphate. Nucleotidase that shows phosphatase activity on nucleoside 5'-monophosphates. The sequence is that of 5'-nucleotidase SurE from Parvibaculum lavamentivorans (strain DS-1 / DSM 13023 / NCIMB 13966).